The primary structure comprises 269 residues: 15-hydroxyprostaglandin dehydrogenase [NAD(+)] (269 aa).

Residues 12–20 (GAAQGIGKA), 36–37 (DW), 63–65 (CDV), and N91 contribute to the NAD(+) site. Substrate contacts are provided by S138 and Q148. Residue Y151 is the Proton acceptor of the active site. Residues 151-155 (YCASK) and 186-188 (VDT) contribute to the NAD(+) site.

Belongs to the short-chain dehydrogenases/reductases (SDR) family. As to quaternary structure, homodimer. In terms of tissue distribution, expressed in proximal convoluted tubules of the kidney, where it colocalizes with the prostaglandin transporter SLC22A22 (at protein level). Expressed in lung, intestine, stomach and liver.

It localises to the cytoplasm. It catalyses the reaction prostaglandin E2 + NAD(+) = 15-oxoprostaglandin E2 + NADH + H(+). It carries out the reaction (15S)-hydroxy-(5Z,8Z,11Z,13E)-eicosatetraenoate + NAD(+) = 15-oxo-(5Z,8Z,11Z,13E)-eicosatetraenoate + NADH + H(+). The enzyme catalyses (11R)-hydroxy-(5Z,8Z,12E,14Z)-eicosatetraenoate + NAD(+) = 11-oxo-(5Z,8Z,12E,14Z)-eicosatetraenoate + NADH + H(+). The catalysed reaction is lipoxin A4 + NAD(+) = 15-oxo-(5S,6R)-dihydroxy-(7E,9E,11Z,13E)-eicosatetraenoate + NADH + H(+). It catalyses the reaction 15-oxo-(5S,6R)-dihydroxy-(7E,9E,11Z)-eicosatrienoate + NADH + H(+) = (5S,6R,15S)-trihydroxy-(7E,9E,11Z)-eicosatrienoate + NAD(+). It carries out the reaction prostaglandin A1 + NAD(+) = 15-oxo-prostaglandin A1 + NADH + H(+). The enzyme catalyses prostaglandin E1 + NAD(+) = 15-oxoprostaglandin E1 + NADH + H(+). The catalysed reaction is 14-hydroxy-(4Z,7Z,10Z,12E,16Z,19Z)-docosahexaenoate + NAD(+) = 14-oxo-(4Z,7Z,10Z,12E,16Z,19Z)-docosahexaenoate + NADH + H(+). It catalyses the reaction resolvin E1 + NAD(+) = 18-oxo-resolvin E1 + NADH + H(+). It carries out the reaction resolvin D1 + NAD(+) = 8-oxoresolvin D1 + NADH + H(+). The enzyme catalyses resolvin D1 + NAD(+) = 17-oxoresolvin D1 + NADH + H(+). The catalysed reaction is resolvin D2 + NAD(+) = 7-oxoresolvin D2 + NADH + H(+). It catalyses the reaction resolvin D2 + NAD(+) = 16-oxoresolvin D2 + NADH + H(+). In terms of biological role, catalyzes the NAD-dependent dehydrogenation (oxidation) of a broad array of hydroxylated polyunsaturated fatty acids (mainly eicosanoids and docosanoids, including prostaglandins, lipoxins and resolvins), yielding their corresponding keto (oxo) metabolites. Decreases the levels of the pro-proliferative prostaglandins such as prostaglandin E2 (whose activity is increased in cancer because of an increase in the expression of cyclooxygenase 2) and generates oxo-fatty acid products that can profoundly influence cell function by abrogating pro-inflammatory cytokine expression. Converts resolvins E1, D1 and D2 to their oxo products, which represents a mode of resolvin inactivation. Resolvin E1 plays important roles during the resolution phase of acute inflammation, while resolvins D1 and D2 have a unique role in obesity-induced adipose inflammation. The chain is 15-hydroxyprostaglandin dehydrogenase [NAD(+)] (Hpgd) from Mus musculus (Mouse).